The sequence spans 308 residues: Aspartate carbamoyltransferase catalytic subunit (308 aa).

Carbamoyl phosphate contacts are provided by Arg-49 and Thr-50. Lys-77 contacts L-aspartate. Carbamoyl phosphate contacts are provided by Arg-99, His-127, and Gln-130. 2 residues coordinate L-aspartate: Arg-160 and Arg-211. Residues Ala-252 and Pro-253 each contribute to the carbamoyl phosphate site.

Belongs to the aspartate/ornithine carbamoyltransferase superfamily. ATCase family. Heterododecamer (2C3:3R2) of six catalytic PyrB chains organized as two trimers (C3), and six regulatory PyrI chains organized as three dimers (R2).

The catalysed reaction is carbamoyl phosphate + L-aspartate = N-carbamoyl-L-aspartate + phosphate + H(+). Its pathway is pyrimidine metabolism; UMP biosynthesis via de novo pathway; (S)-dihydroorotate from bicarbonate: step 2/3. Functionally, catalyzes the condensation of carbamoyl phosphate and aspartate to form carbamoyl aspartate and inorganic phosphate, the committed step in the de novo pyrimidine nucleotide biosynthesis pathway. The protein is Aspartate carbamoyltransferase catalytic subunit of Geobacillus thermodenitrificans (strain NG80-2).